The sequence spans 136 residues: Ribonuclease P protein component (136 aa).

This sequence belongs to the RnpA family. As to quaternary structure, consists of a catalytic RNA component (M1 or rnpB) and a protein subunit.

The catalysed reaction is Endonucleolytic cleavage of RNA, removing 5'-extranucleotides from tRNA precursor.. In terms of biological role, RNaseP catalyzes the removal of the 5'-leader sequence from pre-tRNA to produce the mature 5'-terminus. It can also cleave other RNA substrates such as 4.5S RNA. The protein component plays an auxiliary but essential role in vivo by binding to the 5'-leader sequence and broadening the substrate specificity of the ribozyme. This Arthrobacter sp. (strain FB24) protein is Ribonuclease P protein component.